The chain runs to 162 residues: CDDAMRKTESDKCTNIGGKFDPSTCKCTPETVTEGPTTCLESSESDEVTTKKPCDCTCAPDCKRRKMIIDVLLKYFYRDVYDKDCCKKNCDCDGAKFPECEESNSKQSGMFDILAKLFKPQGGDFEAGSVEVDGKKLTSEKKEKFGKALQDAVKGLEDILNS.

Positions 1–31 are last constant region; the sequence is CDDAMRKTESDKCTNIGGKFDPSTCKCTPET. Residues 32–51 are last Cys-1 repeat; it reads VTEGPTTCLESSESDEVTTK. The unique region stretch occupies residues 52-162; sequence KPCDCTCAPD…VKGLEDILNS (111 aa).

As to expression, salivary gland.

It localises to the secreted. Used by the larvae to construct a supramolecular structure, the larval tube. The polypeptide is Balbiani ring protein 2 (BR2) (Chironomus pallidivittatus (Midge)).